The following is a 114-amino-acid chain: Iron-sulfur cluster insertion protein ErpA (114 aa).

Iron-sulfur cluster is bound by residues cysteine 42, cysteine 106, and cysteine 108.

This sequence belongs to the HesB/IscA family. Homodimer. Requires iron-sulfur cluster as cofactor.

Required for insertion of 4Fe-4S clusters for at least IspG. This chain is Iron-sulfur cluster insertion protein ErpA, found in Yersinia pseudotuberculosis serotype O:1b (strain IP 31758).